The sequence spans 222 residues: MHAAVVVFPGSNCDRDLAVAFEAAGAQVTKVWHKDTDLPEGVDIIGIPGGFSFGDYLRCGAIAANSPICRSVAAHAERGGYVIGICNGFQVLTETGLLPGALLRNAGLKYICKTVALKVETSASAFTEGYTAGDTISIPIAHHDGNYFADDETIARLQGEDRVAFTYEDTPNGAKADIAGILSSNRRVLGMMPHPERAADAGHGGTDGQALFRALTGALAAV.

In terms of domain architecture, Glutamine amidotransferase type-1 spans 3–222; that stretch reads AAVVVFPGSN…RALTGALAAV (220 aa). Cys86 serves as the catalytic Nucleophile. Catalysis depends on residues His194 and Glu196.

Part of the FGAM synthase complex composed of 1 PurL, 1 PurQ and 2 PurS subunits.

The protein localises to the cytoplasm. The enzyme catalyses N(2)-formyl-N(1)-(5-phospho-beta-D-ribosyl)glycinamide + L-glutamine + ATP + H2O = 2-formamido-N(1)-(5-O-phospho-beta-D-ribosyl)acetamidine + L-glutamate + ADP + phosphate + H(+). It catalyses the reaction L-glutamine + H2O = L-glutamate + NH4(+). The protein operates within purine metabolism; IMP biosynthesis via de novo pathway; 5-amino-1-(5-phospho-D-ribosyl)imidazole from N(2)-formyl-N(1)-(5-phospho-D-ribosyl)glycinamide: step 1/2. In terms of biological role, part of the phosphoribosylformylglycinamidine synthase complex involved in the purines biosynthetic pathway. Catalyzes the ATP-dependent conversion of formylglycinamide ribonucleotide (FGAR) and glutamine to yield formylglycinamidine ribonucleotide (FGAM) and glutamate. The FGAM synthase complex is composed of three subunits. PurQ produces an ammonia molecule by converting glutamine to glutamate. PurL transfers the ammonia molecule to FGAR to form FGAM in an ATP-dependent manner. PurS interacts with PurQ and PurL and is thought to assist in the transfer of the ammonia molecule from PurQ to PurL. The polypeptide is Phosphoribosylformylglycinamidine synthase subunit PurQ (Roseobacter denitrificans (strain ATCC 33942 / OCh 114) (Erythrobacter sp. (strain OCh 114))).